We begin with the raw amino-acid sequence, 247 residues long: 5'-nucleotidase SurE (247 aa).

A divalent metal cation is bound by residues D8, D9, S39, and N91.

It belongs to the SurE nucleotidase family. It depends on a divalent metal cation as a cofactor.

It is found in the cytoplasm. It carries out the reaction a ribonucleoside 5'-phosphate + H2O = a ribonucleoside + phosphate. Functionally, nucleotidase that shows phosphatase activity on nucleoside 5'-monophosphates. The chain is 5'-nucleotidase SurE from Nitrosomonas europaea (strain ATCC 19718 / CIP 103999 / KCTC 2705 / NBRC 14298).